Consider the following 184-residue polypeptide: Photosystem I assembly protein Ycf4 (184 aa).

2 consecutive transmembrane segments (helical) span residues 21 to 41 (YFWA…GLSS) and 63 to 83 (IIMT…WLTI).

The protein belongs to the Ycf4 family.

The protein resides in the plastid. Its subcellular location is the chloroplast thylakoid membrane. Seems to be required for the assembly of the photosystem I complex. This Gracilaria tenuistipitata var. liui (Red alga) protein is Photosystem I assembly protein Ycf4.